The primary structure comprises 456 residues: Bifunctional protein GlmU (456 aa).

Positions 1 to 229 are pyrophosphorylase; it reads MLNNAMSVVI…LSEVEGVNNR (229 aa). UDP-N-acetyl-alpha-D-glucosamine is bound by residues 11–14, Lys-25, Gln-76, 81–82, 103–105, Gly-140, Glu-154, Asn-169, and Asn-227; these read LAAG, GT, and YGD. Position 105 (Asp-105) interacts with Mg(2+). Asn-227 lines the Mg(2+) pocket. The tract at residues 230–250 is linker; sequence LQLSRLERVYQSEQAEKLLLA. The N-acetyltransferase stretch occupies residues 251 to 456; the sequence is GVMLRDPARF…EGWRRPVKKK (206 aa). UDP-N-acetyl-alpha-D-glucosamine-binding residues include Arg-333 and Lys-351. Catalysis depends on His-363, which acts as the Proton acceptor. UDP-N-acetyl-alpha-D-glucosamine is bound by residues Tyr-366 and Asn-377. Acetyl-CoA is bound by residues Ala-380, 386–387, Ser-405, Ala-423, and Arg-440; that span reads NY.

This sequence in the N-terminal section; belongs to the N-acetylglucosamine-1-phosphate uridyltransferase family. It in the C-terminal section; belongs to the transferase hexapeptide repeat family. In terms of assembly, homotrimer. It depends on Mg(2+) as a cofactor.

The protein localises to the cytoplasm. It catalyses the reaction alpha-D-glucosamine 1-phosphate + acetyl-CoA = N-acetyl-alpha-D-glucosamine 1-phosphate + CoA + H(+). It carries out the reaction N-acetyl-alpha-D-glucosamine 1-phosphate + UTP + H(+) = UDP-N-acetyl-alpha-D-glucosamine + diphosphate. Its pathway is nucleotide-sugar biosynthesis; UDP-N-acetyl-alpha-D-glucosamine biosynthesis; N-acetyl-alpha-D-glucosamine 1-phosphate from alpha-D-glucosamine 6-phosphate (route II): step 2/2. The protein operates within nucleotide-sugar biosynthesis; UDP-N-acetyl-alpha-D-glucosamine biosynthesis; UDP-N-acetyl-alpha-D-glucosamine from N-acetyl-alpha-D-glucosamine 1-phosphate: step 1/1. It functions in the pathway bacterial outer membrane biogenesis; LPS lipid A biosynthesis. In terms of biological role, catalyzes the last two sequential reactions in the de novo biosynthetic pathway for UDP-N-acetylglucosamine (UDP-GlcNAc). The C-terminal domain catalyzes the transfer of acetyl group from acetyl coenzyme A to glucosamine-1-phosphate (GlcN-1-P) to produce N-acetylglucosamine-1-phosphate (GlcNAc-1-P), which is converted into UDP-GlcNAc by the transfer of uridine 5-monophosphate (from uridine 5-triphosphate), a reaction catalyzed by the N-terminal domain. The chain is Bifunctional protein GlmU from Escherichia coli O8 (strain IAI1).